Reading from the N-terminus, the 136-residue chain is 6,7-dimethyl-8-ribityllumazine synthase (136 aa).

Residues phenylalanine 11, 43 to 45 (SFD), and 67 to 69 (AVI) each bind 5-amino-6-(D-ribitylamino)uracil. Position 72–73 (72–73 (ET)) interacts with (2S)-2-hydroxy-3-oxobutyl phosphate. Histidine 75 functions as the Proton donor in the catalytic mechanism. Leucine 100 lines the 5-amino-6-(D-ribitylamino)uracil pocket. (2S)-2-hydroxy-3-oxobutyl phosphate is bound at residue arginine 115.

This sequence belongs to the DMRL synthase family.

It carries out the reaction (2S)-2-hydroxy-3-oxobutyl phosphate + 5-amino-6-(D-ribitylamino)uracil = 6,7-dimethyl-8-(1-D-ribityl)lumazine + phosphate + 2 H2O + H(+). It functions in the pathway cofactor biosynthesis; riboflavin biosynthesis; riboflavin from 2-hydroxy-3-oxobutyl phosphate and 5-amino-6-(D-ribitylamino)uracil: step 1/2. In terms of biological role, catalyzes the formation of 6,7-dimethyl-8-ribityllumazine by condensation of 5-amino-6-(D-ribitylamino)uracil with 3,4-dihydroxy-2-butanone 4-phosphate. This is the penultimate step in the biosynthesis of riboflavin. This chain is 6,7-dimethyl-8-ribityllumazine synthase, found in Picrophilus torridus (strain ATCC 700027 / DSM 9790 / JCM 10055 / NBRC 100828 / KAW 2/3).